The sequence spans 116 residues: Dynein light chain Tctex-type 3 (116 aa).

Tyrosine 4 carries the post-translational modification 3'-nitrotyrosine.

It belongs to the dynein light chain Tctex-type family. Homodimer. The cytoplasmic dynein 1 complex consists of two catalytic heavy chains (HCs) and a number of non-catalytic subunits presented by intermediate chains (ICs), light intermediate chains (LICs) and light chains (LCs); the composition seems to vary in respect to the IC, LIC and LC composition. The heavy chain homodimer serves as a scaffold for the probable homodimeric assembly of the respective non-catalytic subunits. The ICs and LICs bind directly to the HC dimer and the LCs assemble on the IC dimer. DYNLT1 and DYNLT3 compete for association with dynein IC (DYNC1I1 or DYNC1I2). Self-associates. Interacts with DYNC1I1 and DYNC1I2. Interacts with BUB3. Interacts with SATB1 in nucleus to form complex with matrix attachment regions (MARs) of DNA.

It is found in the nucleus. Its subcellular location is the cytoplasm. The protein localises to the cytoskeleton. It localises to the chromosome. The protein resides in the centromere. It is found in the kinetochore. Functionally, acts as one of several non-catalytic accessory components of the cytoplasmic dynein 1 complex that are thought to be involved in linking dynein to cargos and to adapter proteins that regulate dynein function. Cytoplasmic dynein 1 acts as a motor for the intracellular retrograde motility of vesicles and organelles along microtubules. Probably binds BUB3 as part of transport cargo. Required for the efficient progression through mitosis. In Canis lupus familiaris (Dog), this protein is Dynein light chain Tctex-type 3 (DYNLT3).